Reading from the N-terminus, the 256-residue chain is GCN5-related N-acetyltransferase 10, chloroplastic (256 aa).

Residues 1–41 (MGHLPQSLYSAAGPKFPYPGSSGLGVDQRKLTWSRFPVFLR) constitute a chloroplast transit peptide. Residues 106–256 (FMFFQAEVLS…RRVLMSKRFS (151 aa)) form the N-acetyltransferase domain. Residues 178-180 (LAV), 186-191 (RKKMAS), 217-219 (DAA), and Tyr-224 contribute to the acetyl-CoA site. The Proton donor role is filled by Tyr-224.

Belongs to the acetyltransferase family. GNAT subfamily. In terms of assembly, oligomer. Autoacetylated. Expressed in green tissues.

It localises to the plastid. The protein localises to the chloroplast. The enzyme catalyses an N-terminal L-alpha-aminoacyl-[protein] + acetyl-CoA = N-terminal N(alpha)-acetyl-L-alpha-aminoacyl-[protein] + CoA + H(+). It carries out the reaction L-lysyl-[protein] + acetyl-CoA = N(6)-acetyl-L-lysyl-[protein] + CoA + H(+). The catalysed reaction is N-terminal L-methionyl-[protein] + acetyl-CoA = N-terminal N(alpha)-acetyl-L-methionyl-[protein] + CoA + H(+). It catalyses the reaction N-terminal L-seryl-[protein] + acetyl-CoA = N-terminal N(alpha)-acetyl-L-seryl-[protein] + CoA + H(+). The enzyme catalyses N-terminal L-valyl-[protein] + acetyl-CoA = N-terminal N(alpha)-acetyl-L-valyl-[protein] + CoA + H(+). It carries out the reaction N-terminal L-threonyl-[protein] + acetyl-CoA = N-terminal N(alpha)-acetyl-L-threonyl-[protein] + CoA + H(+). The catalysed reaction is N-terminal L-alanyl-[protein] + acetyl-CoA = N-terminal N(alpha)-acetyl-L-alanyl-[protein] + CoA + H(+). It catalyses the reaction N-terminal glycyl-[protein] + acetyl-CoA = N-terminal N(alpha)-acetylglycyl-[protein] + CoA + H(+). In terms of biological role, protein acetyltransferase with dual specificity triggering both N-alpha-acetylation (NTA), with a preference for leucine, methionine, serine, valine and to a lower extent threonine and alanine as substrates (can also use glycine), and epsilon-lysine acetylation (KA) of several plastid proteins. In Arabidopsis thaliana (Mouse-ear cress), this protein is GCN5-related N-acetyltransferase 10, chloroplastic.